Reading from the N-terminus, the 1085-residue chain is KN motif and ankyrin repeat domain-containing protein 2 (1085 aa).

Residues K136–R145 are compositionally biased toward basic and acidic residues. The tract at residues K136 to T192 is disordered. 2 stretches are compositionally biased toward polar residues: residues N148–R171 and T179–V189. Positions L196–Q216 form a coiled coil. The tract at residues N273 to D295 is disordered. A compositionally biased stretch (polar residues) spans A281–D295. Positions V356–E383 form a coiled coil. Disordered stretches follow at residues R557–Q736, T752–Q791, and T798–L817. The segment covering S589–A600 has biased composition (acidic residues). Residues S601–P611 show a composition bias toward basic and acidic residues. Polar residues predominate over residues A614–H648. Residues T649–H668 are compositionally biased toward low complexity. Polar residues-rich tracts occupy residues N706 to Q736 and S760 to S788. Low complexity predominate over residues T798–T810. 5 ANK repeats span residues N895–K925, A929–A962, A967–L996, D1000–L1030, and D1034–P1063. Positions P1064–K1085 are disordered. The span at K1070–K1085 shows a compositional bias: low complexity.

Its subcellular location is the cytoplasm. It localises to the mitochondrion. May be involved in different biological processes including transcription and apoptosis by sequestering specific proteins outside of the nucleus. Involved in actin stress fibers formation probably through its interaction with ARHGDIA and the regulation of the Rho signaling pathway. May thereby play a role in cell adhesion and migration, regulating for instance podocytes migration during development of the kidney. The chain is KN motif and ankyrin repeat domain-containing protein 2 (kank2) from Danio rerio (Zebrafish).